A 252-amino-acid polypeptide reads, in one-letter code: Probable endonuclease 4 (252 aa).

9 residues coordinate Zn(2+): His-56, His-96, Glu-129, Asp-162, His-165, His-191, Asp-204, His-206, and Glu-233.

Belongs to the AP endonuclease 2 family. Zn(2+) is required as a cofactor.

It carries out the reaction Endonucleolytic cleavage to 5'-phosphooligonucleotide end-products.. Endonuclease IV plays a role in DNA repair. It cleaves phosphodiester bonds at apurinic or apyrimidinic (AP) sites, generating a 3'-hydroxyl group and a 5'-terminal sugar phosphate. The chain is Probable endonuclease 4 from Mycobacterium ulcerans (strain Agy99).